Consider the following 499-residue polypeptide: Anaerobic magnesium-protoporphyrin IX monomethyl ester cyclase (499 aa).

Residues Pro9 to Asn145 enclose the B12-binding domain. The Radical SAM core domain occupies Tyr188–Lys420. [4Fe-4S] cluster contacts are provided by Cys202, Cys206, and Cys209.

It belongs to the BchE family. It depends on [4Fe-4S] cluster as a cofactor. Adenosylcob(III)alamin is required as a cofactor.

The catalysed reaction is Mg-protoporphyrin IX 13-monomethyl ester + 3 S-adenosyl-L-methionine + H2O = 3,8-divinyl protochlorophyllide a + 3 5'-deoxyadenosine + 3 L-methionine + 4 H(+). It functions in the pathway porphyrin-containing compound metabolism; bacteriochlorophyll biosynthesis (light-independent). Its function is as follows. Involved in the tetrapyrrole biosynthetic pathways leading to chlorophyll and bacteriochlorophyll (BChl). Catalyzes the anaerobic formation of the isocyclic ring (E-ring) in Mg-protoporphyrin monomethyl ester (MPE) to yield protochlorophyllide a (PChlide a) via a six-electron oxidation and the formation of an oxo group at position C13 using oxygen from a water molecule. The protein is Anaerobic magnesium-protoporphyrin IX monomethyl ester cyclase of Synechocystis sp. (strain ATCC 27184 / PCC 6803 / Kazusa).